The following is a 64-amino-acid chain: Small ribosomal subunit protein eS17 (64 aa).

It belongs to the eukaryotic ribosomal protein eS17 family.

This chain is Small ribosomal subunit protein eS17, found in Methanospirillum hungatei JF-1 (strain ATCC 27890 / DSM 864 / NBRC 100397 / JF-1).